Consider the following 106-residue polypeptide: Protein Rev (106 aa).

Residues 8–16 (LIKFLYQSN) are homomultimerization. A disordered region spans residues 14-39 (QSNPPPKPEGTRQARRNRRRRWRERQ). The short motif at 24 to 40 (TRQARRNRRRRWRERQR) is the Nuclear localization signal and RNA-binding (RRE) element. A compositionally biased stretch (basic residues) spans 26–37 (QARRNRRRRWRE). A Nuclear export signal and binding to XPO1 motif is present at residues 63-74 (LQLPPLERLTLD). A phosphoserine; by host mark is found at Ser-82 and Ser-89. The disordered stretch occupies residues 82–106 (SGTQGVGSPQILVESPTVLESGTKE).

This sequence belongs to the HIV-1 REV protein family. As to quaternary structure, homomultimer; when bound to the RRE. Multimeric assembly is essential for activity and may involve XPO1. Binds to human KPNB1, XPO1, TNPO1, RANBP5 and IPO7. Interacts with the viral Integrase. Interacts with human KHDRBS1. Interacts with human NAP1; this interaction decreases Rev multimerization and stimulates its activity. Interacts with human DEAD-box helicases DDX3 and DDX24; these interactions may serve for viral RNA export to the cytoplasm and packaging, respectively. Interacts with human PSIP1; this interaction may inhibit HIV-1 DNA integration by promoting dissociation of the Integrase-LEDGF/p75 complex. In terms of processing, asymmetrically arginine dimethylated at one site by host PRMT6. Methylation impairs the RNA-binding activity and export of viral RNA from the nucleus to the cytoplasm. Post-translationally, phosphorylated by protein kinase CK2. Presence of, and maybe binding to the N-terminus of the regulatory beta subunit of CK2 is necessary for CK2-mediated Rev's phosphorylation.

It localises to the host nucleus. The protein resides in the host nucleolus. Its subcellular location is the host cytoplasm. Escorts unspliced or incompletely spliced viral pre-mRNAs (late transcripts) out of the nucleus of infected cells. These pre-mRNAs carry a recognition sequence called Rev responsive element (RRE) located in the env gene, that is not present in fully spliced viral mRNAs (early transcripts). This function is essential since most viral proteins are translated from unspliced or partially spliced pre-mRNAs which cannot exit the nucleus by the pathway used by fully processed cellular mRNAs. Rev itself is translated from a fully spliced mRNA that readily exits the nucleus. Rev's nuclear localization signal (NLS) binds directly to KPNB1/Importin beta-1 without previous binding to KPNA1/Importin alpha-1. KPNB1 binds to the GDP bound form of RAN (Ran-GDP) and targets Rev to the nucleus. In the nucleus, the conversion from Ran-GDP to Ran-GTP dissociates Rev from KPNB1 and allows Rev's binding to the RRE in viral pre-mRNAs. Rev multimerization on the RRE via cooperative assembly exposes its nuclear export signal (NES) to the surface. Rev can then form a complex with XPO1/CRM1 and Ran-GTP, leading to nuclear export of the complex. Conversion from Ran-GTP to Ran-GDP mediates dissociation of the Rev/RRE/XPO1/RAN complex, so that Rev can return to the nucleus for a subsequent round of export. Beside KPNB1, also seems to interact with TNPO1/Transportin-1, RANBP5/IPO5 and IPO7/RANBP7 for nuclear import. The nucleoporin-like HRB/RIP is an essential cofactor that probably indirectly interacts with Rev to release HIV RNAs from the perinuclear region to the cytoplasm. The sequence is that of Protein Rev from Homo sapiens (Human).